Consider the following 962-residue polypeptide: Integrator complex subunit 7 (962 aa).

A phosphoserine mark is found at Ser338 and Ser809.

Belongs to the Integrator subunit 7 family. Component of the Integrator complex, composed of core subunits INTS1, INTS2, INTS3, INTS4, INTS5, INTS6, INTS7, INTS8, INTS9/RC74, INTS10, INTS11/CPSF3L, INTS12, INTS13, INTS14 and INTS15. The core complex associates with protein phosphatase 2A subunits PPP2CA and PPP2R1A, to form the Integrator-PP2A (INTAC) complex. Interacts with NABP2.

It localises to the nucleus. Its subcellular location is the chromosome. The protein resides in the cytoplasm. Its function is as follows. Component of the integrator complex, a multiprotein complex that terminates RNA polymerase II (Pol II) transcription in the promoter-proximal region of genes. The integrator complex provides a quality checkpoint during transcription elongation by driving premature transcription termination of transcripts that are unfavorably configured for transcriptional elongation: the complex terminates transcription by (1) catalyzing dephosphorylation of the C-terminal domain (CTD) of Pol II subunit POLR2A/RPB1 and SUPT5H/SPT5, (2) degrading the exiting nascent RNA transcript via endonuclease activity and (3) promoting the release of Pol II from bound DNA. The integrator complex is also involved in terminating the synthesis of non-coding Pol II transcripts, such as enhancer RNAs (eRNAs), small nuclear RNAs (snRNAs), telomerase RNAs and long non-coding RNAs (lncRNAs). May be not involved in the recruitment of cytoplasmic dynein to the nuclear envelope by different components of the INT complex. Plays a role in DNA damage response (DDR) signaling during the S phase. The polypeptide is Integrator complex subunit 7 (Homo sapiens (Human)).